The chain runs to 122 residues: Large ribosomal subunit protein uL14 (122 aa).

This sequence belongs to the universal ribosomal protein uL14 family. In terms of assembly, part of the 50S ribosomal subunit. Forms a cluster with proteins L3 and L19. In the 70S ribosome, L14 and L19 interact and together make contacts with the 16S rRNA in bridges B5 and B8.

Binds to 23S rRNA. Forms part of two intersubunit bridges in the 70S ribosome. This is Large ribosomal subunit protein uL14 from Polaromonas naphthalenivorans (strain CJ2).